Here is a 163-residue protein sequence, read N- to C-terminus: Cyanate hydratase (163 aa).

Catalysis depends on residues R103, E106, and S129.

This sequence belongs to the cyanase family.

It carries out the reaction cyanate + hydrogencarbonate + 3 H(+) = NH4(+) + 2 CO2. Functionally, catalyzes the reaction of cyanate with bicarbonate to produce ammonia and carbon dioxide. The polypeptide is Cyanate hydratase (Talaromyces marneffei (strain ATCC 18224 / CBS 334.59 / QM 7333) (Penicillium marneffei)).